Here is a 169-residue protein sequence, read N- to C-terminus: Probable chemoreceptor glutamine deamidase CheD (169 aa).

The protein belongs to the CheD family.

It catalyses the reaction L-glutaminyl-[protein] + H2O = L-glutamyl-[protein] + NH4(+). In terms of biological role, probably deamidates glutamine residues to glutamate on methyl-accepting chemotaxis receptors (MCPs), playing an important role in chemotaxis. The polypeptide is Probable chemoreceptor glutamine deamidase CheD (Solibacter usitatus (strain Ellin6076)).